A 357-amino-acid polypeptide reads, in one-letter code: Protein pelota homolog (357 aa).

It belongs to the eukaryotic release factor 1 family. Pelota subfamily. As to quaternary structure, monomer. The cofactor is a divalent metal cation.

Its subcellular location is the cytoplasm. Functionally, may function in recognizing stalled ribosomes, interact with stem-loop structures in stalled mRNA molecules, and effect endonucleolytic cleavage of the mRNA. May play a role in the release non-functional ribosomes and degradation of damaged mRNAs. Has endoribonuclease activity. In Thermococcus gammatolerans (strain DSM 15229 / JCM 11827 / EJ3), this protein is Protein pelota homolog.